A 368-amino-acid polypeptide reads, in one-letter code: 3-dehydroquinate synthase (368 aa).

Residues 76–81, 110–114, 134–135, Lys-147, Lys-156, and 174–177 contribute to the NAD(+) site; these read DGEQYK, GVIGD, TT, and CLKT. Residues Glu-189, His-252, and His-269 each coordinate Zn(2+).

The protein belongs to the sugar phosphate cyclases superfamily. Dehydroquinate synthase family. It depends on NAD(+) as a cofactor. Co(2+) is required as a cofactor. Requires Zn(2+) as cofactor.

It is found in the cytoplasm. It carries out the reaction 7-phospho-2-dehydro-3-deoxy-D-arabino-heptonate = 3-dehydroquinate + phosphate. It functions in the pathway metabolic intermediate biosynthesis; chorismate biosynthesis; chorismate from D-erythrose 4-phosphate and phosphoenolpyruvate: step 2/7. Functionally, catalyzes the conversion of 3-deoxy-D-arabino-heptulosonate 7-phosphate (DAHP) to dehydroquinate (DHQ). In Vibrio vulnificus (strain YJ016), this protein is 3-dehydroquinate synthase.